Reading from the N-terminus, the 364-residue chain is DNA polymerase IV (364 aa).

The 185-residue stretch at 14–198 (IIHIDMDAFF…LPIEKFHGVG (185 aa)) folds into the UmuC domain. Positions 18 and 116 each coordinate Mg(2+). The active site involves E117.

The protein belongs to the DNA polymerase type-Y family. Monomer. The cofactor is Mg(2+).

It is found in the cytoplasm. The enzyme catalyses DNA(n) + a 2'-deoxyribonucleoside 5'-triphosphate = DNA(n+1) + diphosphate. In terms of biological role, poorly processive, error-prone DNA polymerase involved in untargeted mutagenesis. Copies undamaged DNA at stalled replication forks, which arise in vivo from mismatched or misaligned primer ends. These misaligned primers can be extended by PolIV. Exhibits no 3'-5' exonuclease (proofreading) activity. May be involved in translesional synthesis, in conjunction with the beta clamp from PolIII. The chain is DNA polymerase IV from Streptococcus agalactiae serotype Ia (strain ATCC 27591 / A909 / CDC SS700).